Reading from the N-terminus, the 196-residue chain is Peptidyl-tRNA hydrolase (196 aa).

Tyr-18 is a binding site for tRNA. The active-site Proton acceptor is the His-23. Phe-69, Asn-71, and Asn-117 together coordinate tRNA.

It belongs to the PTH family. In terms of assembly, monomer.

The protein localises to the cytoplasm. The enzyme catalyses an N-acyl-L-alpha-aminoacyl-tRNA + H2O = an N-acyl-L-amino acid + a tRNA + H(+). In terms of biological role, hydrolyzes ribosome-free peptidyl-tRNAs (with 1 or more amino acids incorporated), which drop off the ribosome during protein synthesis, or as a result of ribosome stalling. Its function is as follows. Catalyzes the release of premature peptidyl moieties from peptidyl-tRNA molecules trapped in stalled 50S ribosomal subunits, and thus maintains levels of free tRNAs and 50S ribosomes. The chain is Peptidyl-tRNA hydrolase from Vibrio vulnificus (strain CMCP6).